The primary structure comprises 440 residues: Tetratricopeptide repeat protein 5 (440 aa).

TPR repeat units lie at residues 7–61 (EEVK…EEVV), 68–98 (AQVL…AVKL), 103–130 (VEAW…SGAL), 136–174 (KVSL…AVQM), and 179–216 (GRSW…AEKV). Residues 13 to 24 (LQKLQELVDQLY) carry the Nuclear export signal motif. Phosphoserine; by ATM is present on Ser203. Phosphoserine; by CHEK2 is present on Ser221. The stretch at 224–253 (PDLHLNRATLHKYEENYGEALEGFSRAAAL) is one TPR 6 repeat. The mediates interaction with 28S rRNA of ribosome-coding tubulin stretch occupies residues 285–287 (KTK).

As to quaternary structure, interacts with JMY and p300/EP300; the interaction occurs in the nucleus and augments the association between JMY and p300/EP300 in response to DNA damage. Interacts with PRMT5; the interaction is DNA damage-dependent and promotes PRMT5 interaction with p53/TP53 and subsequent methylation. Forms a complex with HSF1 and p300/EP300; these interactions augment chromatin-bound HSF1 and p300/EP300 histone acetyltransferase activity, resulting in enhanced heat-shock-responsive transcription. Interacts with JMY; the interaction occurs in the cytoplasm and results in the inhibition of JYM's nucleation activity. Interacts with ribosome-coding tubulin (via 60S subunit 28S rRNA and protein uL24/RPL26) and the N-terminal of nascent tubulin polypeptide (via alpha-tubulin MREC motif and beta-tubulin MREI motif); these interactions result in tubulin mRNA-targeted degradation. Interacts with ATP5F1B; the interaction occurs in the mitochondria and results in ATP production decrease. Interacts with p53/TP53; the interaction occurs in the mitochondria and results in increased apoptosis. Phosphorylation by ATM kinase induces nuclear accumulation while interfering with nuclear export, and phosphorylation by CHEK2 kinase enhances nuclear stability.

It is found in the nucleus. Its subcellular location is the cytoplasm. It localises to the cytoplasmic vesicle. The protein localises to the mitochondrion matrix. Its function is as follows. Cofactor involved in the regulation of various cellular mechanisms such as actin regulation, autophagy, chromatin regulation and DNA repair. In physiological conditions, interacts with cofactor JMY in the cytoplasm which prevents JMY's actin nucleation activity and ability to activate the Arp2/3 complex. Acts as a negative regulator of nutrient stress-induced autophagy by inhibiting JMY's interaction with MAP1LC3B, thereby preventing autophagosome formation. Involves in tubulin autoregulation by promoting its degradation in response to excess soluble tubulin. To do so, associates with the active ribosome near the ribosome exit tunnel and with nascent tubulin polypeptides early during their translation, triggering tubulin mRNA-targeted degradation. Following DNA damage, phosphorylated by DNA damage responsive protein kinases ATM and CHEK2, leading to its nuclear accumulation and stability. Nuclear TTC5/STRAP promotes the assembly of a stress-responsive p53/TP53 coactivator complex, which includes the coactivators JMY and p300, thereby increasing p53/TP53-dependent transcription and apoptosis. Also recruits arginine methyltransferase PRMT5 to p53/TP53 when DNA is damaged, allowing PRMT5 to methylate p53/TP53. In DNA stress conditions, also prevents p53/TP53 degradation by E3 ubiquitin ligase MDM2. Upon heat-shock stress, forms a chromatin-associated complex with heat-shock factor 1 HSF1 and p300/EP300 to stimulate heat-shock-responsive transcription, thereby increasing cell survival. Mitochondrial TTC5/STRAP interacts with ATP synthase subunit beta ATP5F1B which decreased ATP synthase activity and lowers mitochondrial ATP production, thereby regulating cellular respiration and mitochondrial-dependent apoptosis. Mitochondrial TTC5/STRAP also regulates p53/TP53-mediated apoptosis. This chain is Tetratricopeptide repeat protein 5 (TTC5), found in Bos taurus (Bovine).